An 800-amino-acid chain; its full sequence is Nuclear cap-binding protein subunit 1 (800 aa).

The disordered stretch occupies residues 1–26 (MSRRRAHDTEDEGYDHRRNKRRRVSE). T9 bears the Phosphothreonine mark. Positions 31-243 (EDRLESLILR…CLWAQIRKLR (213 aa)) constitute an MIF4G domain. The segment at 669–699 (LSKADSSSSDSDEDTPHKRKKPITHADKPSE) is disordered.

It belongs to the NCBP1 family. In terms of assembly, component of the nuclear cap-binding complex (CBC), a heterodimer composed of Cbp80 and Cbp20 that interacts with m7GpppG-capped RNA.

The protein localises to the nucleus. Component of the cap-binding complex (CBC), which binds cotranscriptionally to the 5'-cap of pre-mRNAs and is involved in various processes such as pre-mRNA splicing and RNA-mediated gene silencing (RNAi). The CBC complex is involved in miRNA-mediated RNA interference via its interaction with Ars2 and is required for primary microRNAs (miRNAs) processing. Also involved in innate immunity via the short interfering RNAs (siRNAs) processing machinery by restricting the viral RNA production. In the CBC complex, Cbp80 does not bind directly capped RNAs (m7GpppG-capped RNA) but is required to stabilize the movement of the N-terminal loop of Cbp20 and lock the CBC into a high affinity cap-binding state with the cap structure. This Drosophila willistoni (Fruit fly) protein is Nuclear cap-binding protein subunit 1 (Cbp80).